Consider the following 242-residue polypeptide: MNDWLFDLGNSRFKCASLREGVIGPVTVLPYLTETMDAFALQELPRGRVAYLASVAAPAITTHVLEVLKIHFEKVQVAATVAACAGVRIAYAHPERFGVDRFLALLGSYGEGNVLVVGVGTALTIDLLAANGCHLGGRISASPTLMRQALHARAEQLPLSGGNYLEFAEDTEDALVSGCNGAAVALIERSLYEAHQRLDQSVRLLLHGGGVASLLPWLGDVVHRPKLVLDGLAIWAAVAANV.

Residue 7 to 14 coordinates ATP; it reads DLGNSRFK. Residues Tyr-91 and 98-101 each bind substrate; that span reads GVDR. The Proton acceptor role is filled by Asp-100. An ATP-binding site is contributed by Thr-121. Thr-171 provides a ligand contact to substrate.

Belongs to the type III pantothenate kinase family. Homodimer. The cofactor is NH4(+). It depends on K(+) as a cofactor.

The protein resides in the cytoplasm. The enzyme catalyses (R)-pantothenate + ATP = (R)-4'-phosphopantothenate + ADP + H(+). It participates in cofactor biosynthesis; coenzyme A biosynthesis; CoA from (R)-pantothenate: step 1/5. Catalyzes the phosphorylation of pantothenate (Pan), the first step in CoA biosynthesis. This Xylella fastidiosa (strain M23) protein is Type III pantothenate kinase.